A 1163-amino-acid polypeptide reads, in one-letter code: Putative beta-glucuronidase (1163 aa).

The first 20 residues, 1 to 20 (MPRFLKYILGLFLISISAFG), serve as a signal peptide directing secretion.

The protein belongs to the glycosyl hydrolase 2 family.

The protein resides in the periplasm. It carries out the reaction a beta-D-glucuronoside + H2O = D-glucuronate + an alcohol. Glycoside hydrolase involved in ulvan degradation. Ulvan is the main polysaccharide component of the Ulvales (green seaweed) cell wall. It is composed of disaccharide building blocks comprising 3-sulfated rhamnose (Rha3S) linked to D-glucuronic acid (GlcA), L-iduronic acid (IduA), or D-xylose (Xyl). This chain is Putative beta-glucuronidase, found in Formosa agariphila (strain DSM 15362 / KCTC 12365 / LMG 23005 / KMM 3901 / M-2Alg 35-1).